Here is a 93-residue protein sequence, read N- to C-terminus: MKKTLMLLAMVVALVILPFFINHGGEYGGSDGEAESQIQAIAPHYKPWFQPLYEPASGEIESLLFTLQGSLGAAVIFYILGYCKGKQRRDDRA.

A run of 2 helical transmembrane segments spans residues 5–25 (LMLLAMVVALVILPFFINHGG) and 63–83 (LLFTLQGSLGAAVIFYILGYC).

The protein belongs to the CbiN family. As to quaternary structure, forms an energy-coupling factor (ECF) transporter complex composed of an ATP-binding protein (A component, CbiO), a transmembrane protein (T component, CbiQ) and 2 possible substrate-capture proteins (S components, CbiM and CbiN) of unknown stoichimetry.

Its subcellular location is the cell inner membrane. The protein operates within cofactor biosynthesis; adenosylcobalamin biosynthesis. In terms of biological role, part of the energy-coupling factor (ECF) transporter complex CbiMNOQ involved in cobalt import. The chain is Cobalt transport protein CbiN from Salmonella arizonae (strain ATCC BAA-731 / CDC346-86 / RSK2980).